The following is a 475-amino-acid chain: uncharacterized protein (475 aa).

A helical transmembrane segment spans residues His-7 to Tyr-28. 3 N-linked (GlcNAc...) asparagine; by host glycosylation sites follow: Asn-73, Asn-83, and Asn-195. Residues Glu-183–Leu-233 adopt a coiled-coil conformation. Polar residues predominate over residues Ser-295–Asn-305. A disordered region spans residues Ser-295–Val-324. Residues Asn-450 and Asn-460 are each glycosylated (N-linked (GlcNAc...) asparagine; by host).

The protein belongs to the asfivirus B475L family.

Its subcellular location is the host membrane. This is an uncharacterized protein from Ornithodoros (relapsing fever ticks).